A 245-amino-acid chain; its full sequence is 1-(5-phosphoribosyl)-5-[(5-phosphoribosylamino)methylideneamino] imidazole-4-carboxamide isomerase (245 aa).

D7 serves as the catalytic Proton acceptor. The active-site Proton donor is D129.

The protein belongs to the HisA/HisF family.

It is found in the cytoplasm. The enzyme catalyses 1-(5-phospho-beta-D-ribosyl)-5-[(5-phospho-beta-D-ribosylamino)methylideneamino]imidazole-4-carboxamide = 5-[(5-phospho-1-deoxy-D-ribulos-1-ylimino)methylamino]-1-(5-phospho-beta-D-ribosyl)imidazole-4-carboxamide. It participates in amino-acid biosynthesis; L-histidine biosynthesis; L-histidine from 5-phospho-alpha-D-ribose 1-diphosphate: step 4/9. The polypeptide is 1-(5-phosphoribosyl)-5-[(5-phosphoribosylamino)methylideneamino] imidazole-4-carboxamide isomerase (Shewanella pealeana (strain ATCC 700345 / ANG-SQ1)).